A 300-amino-acid polypeptide reads, in one-letter code: Lysenin-related protein 3 (300 aa).

Residues 12-35 (EEIEVDVVAVWKEGYVYENRGDTS) form an N-terminal cap domain region. A beta-hairpin domain region spans residues 36 to 109 (VEQKITMTKG…SQVIEHTVTI (74 aa)). An N-terminal cap domain region spans residues 110 to 158 (PPTSKFTRWKLNADVGGTDIEYMYLIDEVTPISVTQTIPQVIRSRAKIL). The segment at 159–299 (VGRQIHLGTT…EDKWILEVVN (141 aa)) is C-terminal receptor-binding domain. K187, S229, Y235, and Y284 together coordinate an N-(acyl)-sphingosylphosphocholine. An intrachain disulfide couples C274 to C285.

Belongs to the lysenin family. In terms of assembly, binds to sphingomyelin as a monomer by using its C-terminal domain. Forms a nonamer when sphingomyelin/LRP-3 ratio is lower than ca 500. Oligomerization, but not binding, is influenced by the fluidity of sphingomyelin. As to expression, expressed by coelomocytes.

It is found in the secreted. The protein resides in the target cell membrane. Pore-forming toxin that specifically binds sphingomyelin in the plasma membrane of various cells. Has antibacterial and hemolytic activity. This is Lysenin-related protein 3 from Eisenia fetida (Red wiggler worm).